The sequence spans 155 residues: 6,7-dimethyl-8-ribityllumazine synthase (155 aa).

5-amino-6-(D-ribitylamino)uracil-binding positions include Phe-23, 57–59 (AFE), and 81–83 (AVI). 86–87 (ST) contacts (2S)-2-hydroxy-3-oxobutyl phosphate. His-89 serves as the catalytic Proton donor. Phe-114 provides a ligand contact to 5-amino-6-(D-ribitylamino)uracil. Residue Arg-128 coordinates (2S)-2-hydroxy-3-oxobutyl phosphate.

Belongs to the DMRL synthase family.

It carries out the reaction (2S)-2-hydroxy-3-oxobutyl phosphate + 5-amino-6-(D-ribitylamino)uracil = 6,7-dimethyl-8-(1-D-ribityl)lumazine + phosphate + 2 H2O + H(+). It functions in the pathway cofactor biosynthesis; riboflavin biosynthesis; riboflavin from 2-hydroxy-3-oxobutyl phosphate and 5-amino-6-(D-ribitylamino)uracil: step 1/2. Catalyzes the formation of 6,7-dimethyl-8-ribityllumazine by condensation of 5-amino-6-(D-ribitylamino)uracil with 3,4-dihydroxy-2-butanone 4-phosphate. This is the penultimate step in the biosynthesis of riboflavin. The protein is 6,7-dimethyl-8-ribityllumazine synthase of Geobacter sulfurreducens (strain ATCC 51573 / DSM 12127 / PCA).